A 223-amino-acid polypeptide reads, in one-letter code: MQLERLQKKLGYQFANLDYLTQALTHRSAASKNNERLEFLGDSILNFAIGKALYEKFPKANEGELSRMRAALVKEQTLAVVARQFELGEYMKLGAGELKSGGYRRESILSDCVEAIIAAVYLDAGIDRAMERVHCWYQQLLNDMQLGEAQKDPKTRLQEYLQGRKLPLPTYEVIDIKGEAHNQTFKVSCKVEKVDEIFIGNGTSRRKAEQDAALQVIKVLGIK.

An RNase III domain is found at 3-125 (LERLQKKLGY…IIAAVYLDAG (123 aa)). Glu-38 is a binding site for Mg(2+). Asp-42 is a catalytic residue. Asp-111 and Glu-114 together coordinate Mg(2+). Glu-114 is an active-site residue. The DRBM domain maps to 152-222 (DPKTRLQEYL…ALQVIKVLGI (71 aa)).

The protein belongs to the ribonuclease III family. As to quaternary structure, homodimer. It depends on Mg(2+) as a cofactor.

The protein localises to the cytoplasm. The catalysed reaction is Endonucleolytic cleavage to 5'-phosphomonoester.. Functionally, digests double-stranded RNA. Involved in the processing of primary rRNA transcript to yield the immediate precursors to the large and small rRNAs (23S and 16S). Processes some mRNAs, and tRNAs when they are encoded in the rRNA operon. Processes pre-crRNA and tracrRNA of type II CRISPR loci if present in the organism. The chain is Ribonuclease 3 from Glaesserella parasuis serovar 5 (strain SH0165) (Haemophilus parasuis).